The chain runs to 505 residues: MEEIQRYLQLDRSQQHDFLYPLIFQEYIYALAHHHSLNRSILLENPDYDNQLSFLIVKRLITRMYQQNHFIIFANDSNQNPFFGRNNNLYSQTISEGFSFIVEIPFYIRLIPSQAGKGILKSYNLRSIHSLFPFLENNFSHLNSVLDILIPRSVHLEILVQNLRYWVKDVSSLHLLRFLFRESWNCNPLIATKKRGFGFEPKRSQRLLFFLYNSHVCEYESIFVFLRNQSSHLRSTSFGVFLERIYFYGKIERLVEVFAKDFRASLWLFKDPFMHYVRYQGKSILVSKGTPLLMNKWKYYLVNFWQSYFDLWVHSGRVYINQLPNHSLNFIGYLSSVRLNPSMVRSQMLENSFLINNAIKKLDTLVPIVPLIGSLAKAKFCNLLGHPISKPAWAGLSDSDIIDRFGQICRNLSHYHSGSSKKKSLYRIKYILRLSCAKTLARKHKSTVRAFLKRLGSEFLEEFLTLEEEVLSLTFPRASSTFRGEYRSRIWYLDIIYINDLTNFQ.

The protein belongs to the intron maturase 2 family. MatK subfamily.

Its subcellular location is the plastid. The protein resides in the chloroplast. Functionally, usually encoded in the trnK tRNA gene intron. Probably assists in splicing its own and other chloroplast group II introns. The sequence is that of Maturase K from Chiococca alba (West Indian milkberry).